An 880-amino-acid chain; its full sequence is DNA-directed RNA polymerase subunit Rpo1N (880 aa).

Residues C58, C61, C68, and H71 each coordinate Zn(2+). DsDNA-binding positions include K88 and E92 to K95. Zn(2+)-binding residues include C98 and C101. A dsDNA-binding site is contributed by K138. Zn(2+) contacts are provided by C146 and C149. DsDNA-binding positions include K303, K305–R310, R323, and Q422. Mg(2+) is bound by residues D456, D458, and D460. R573, C575, C580, and H582 together coordinate Zn(2+). Residues R812–R822 and Q815 contribute to the dsDNA site.

The protein belongs to the RNA polymerase beta' chain family. As to quaternary structure, part of the 13-subunit RNA polymerase complex. Rpo1N and Rpo5 form a cleft which docks Rpo13. Interacts with Rpo8 on the periphery of the clamp head. The cofactor is Mg(2+). Zn(2+) is required as a cofactor.

The protein resides in the cytoplasm. It catalyses the reaction RNA(n) + a ribonucleoside 5'-triphosphate = RNA(n+1) + diphosphate. Functionally, DNA-dependent RNA polymerase (RNAP) catalyzes the transcription of DNA into RNA using the four ribonucleoside triphosphates as substrates. Forms the clamp head domain. The sequence is that of DNA-directed RNA polymerase subunit Rpo1N from Saccharolobus shibatae (strain ATCC 51178 / DSM 5389 / JCM 8931 / NBRC 15437 / B12) (Sulfolobus shibatae).